The primary structure comprises 370 residues: Cyanuric acid amidohydrolase (370 aa).

The RU A stretch occupies residues 1–103 (MQAQVFRVPM…TIFTVQKTDN (103 aa)). Substrate-binding positions include R51 and 82 to 83 (SG). The tract at residues 113 to 250 (RLAVQQIFTR…NEIIVMGNSR (138 aa)) is RU B. The active site involves K163. Substrate is bound by residues R195 and 233–234 (SA). S233 serves as the catalytic Nucleophile. An RU C region spans residues 256–370 (LVIGHAEMKD…GPVAVIARTA (115 aa)). Residue E303 participates in Mg(2+) binding. Residues R330 and 349–350 (SG) each bind substrate. Residues S352, Q355, G356, P357, and G360 each coordinate Mg(2+).

Belongs to the cyclic amide hydrolase (CyAH) family. In terms of assembly, homotetramer.

It carries out the reaction cyanurate + H2O = 1-carboxybiuret + H(+). It participates in xenobiotic degradation; atrazine degradation; biuret from cyanurate: step 1/1. Its activity is regulated as follows. Inhibited by barbituric acid. In terms of biological role, responsible for the hydrolysis of cyanuric acid, an intermediate formed during catabolism of s-triazine based compounds in herbicides such as atrazine and polymers such as melamine. Catalyzes the hydrolytic opening of the s-triazine ring of cyanuric acid (2,4,6-trihydroxy-s-triazine) to yield carbon dioxide and carboxybiuret, which spontaneously decarboxylates to biuret. This Pseudomonas sp protein is Cyanuric acid amidohydrolase (trzD).